A 397-amino-acid chain; its full sequence is Phosphoglycerate kinase (397 aa).

Residues 25–27 (DLN), Arg-41, 64–67 (HLGR), Arg-118, and Arg-151 each bind substrate. Residues Lys-202, Glu-324, and 350–353 (GGDT) contribute to the ATP site.

Belongs to the phosphoglycerate kinase family. In terms of assembly, monomer.

It is found in the cytoplasm. It catalyses the reaction (2R)-3-phosphoglycerate + ATP = (2R)-3-phospho-glyceroyl phosphate + ADP. The protein operates within carbohydrate degradation; glycolysis; pyruvate from D-glyceraldehyde 3-phosphate: step 2/5. This Albidiferax ferrireducens (strain ATCC BAA-621 / DSM 15236 / T118) (Rhodoferax ferrireducens) protein is Phosphoglycerate kinase.